Here is a 431-residue protein sequence, read N- to C-terminus: MRGLEKQGPSATAAPCGCAQPALETGNLLTEPIGYLESCFSAKIGTPRQPSICSQSRACLKIRKSIFNNPEHSLMGLEQFSHVWILFVFHKNGHLNYKAKVQPPRLNGAKTGVFSTRSPHRPNAIGLTLAKLEKVEGGAVYLSGIDMIHGTPVLDIKPYIADYDSPQNLEPQTKHHKLRAAGPSDATANSCDQQLLSGCEKAQPCHSTKEKPKCREHRTSDENSQKFRDTSEIQHTLPEDRERAVDLALESSREETMDEPEDQLGPQELKSFLEEGTDRPRKVEGALVLRGSSAETRWDASCHARTADRVPCSVVPSWVKEAPVATLQVRFTPHAEMDLRKLSSGGASQTSFKYFHSAEEAKCAIEAMLSADPRSVYRRKLCEDRLFFFTVDIAHVTCWFGDGFAEVLRIKLASEPVEVADPEESLVALGS.

In terms of domain architecture, TsaA-like spans 30-168 (TEPIGYLESC…YIADYDSPQN (139 aa)). S-adenosyl-L-methionine-binding positions include 47–49 (PRQ), 90–91 (HK), R117, L127, and 148–151 (IHGT). 2 disordered regions span residues 167–189 (QNLE…ATAN) and 201–243 (KAQP…DRER). Positions 207–243 (STKEKPKCREHRTSDENSQKFRDTSEIQHTLPEDRER) are enriched in basic and acidic residues.

This sequence belongs to the tRNA methyltransferase O family.

The catalysed reaction is N(6)-L-threonylcarbamoyladenosine(37) in tRNA + S-adenosyl-L-methionine = N(6)-methyl,N(6)-L-threonylcarbamoyladenosine(37) in tRNA + S-adenosyl-L-homocysteine + H(+). Its function is as follows. S-adenosyl-L-methionine-dependent methyltransferase responsible for the addition of the methyl group in the formation of N6-methyl-N6-threonylcarbamoyladenosine at position 37 (m(6)t(6)A37) of the tRNA anticodon loop of tRNA(Ser)(GCU). The methyl group of m(6)t(6)A37 may improve the efficiency of the tRNA decoding ability. May bind to tRNA. The polypeptide is tRNA (adenine(37)-N6)-methyltransferase (Rattus norvegicus (Rat)).